Here is a 503-residue protein sequence, read N- to C-terminus: Aspartyl/glutamyl-tRNA(Asn/Gln) amidotransferase subunit B (503 aa).

The protein belongs to the GatB/GatE family. GatB subfamily. As to quaternary structure, heterotrimer of A, B and C subunits.

The catalysed reaction is L-glutamyl-tRNA(Gln) + L-glutamine + ATP + H2O = L-glutaminyl-tRNA(Gln) + L-glutamate + ADP + phosphate + H(+). It catalyses the reaction L-aspartyl-tRNA(Asn) + L-glutamine + ATP + H2O = L-asparaginyl-tRNA(Asn) + L-glutamate + ADP + phosphate + 2 H(+). Functionally, allows the formation of correctly charged Asn-tRNA(Asn) or Gln-tRNA(Gln) through the transamidation of misacylated Asp-tRNA(Asn) or Glu-tRNA(Gln) in organisms which lack either or both of asparaginyl-tRNA or glutaminyl-tRNA synthetases. The reaction takes place in the presence of glutamine and ATP through an activated phospho-Asp-tRNA(Asn) or phospho-Glu-tRNA(Gln). This is Aspartyl/glutamyl-tRNA(Asn/Gln) amidotransferase subunit B from Roseobacter denitrificans (strain ATCC 33942 / OCh 114) (Erythrobacter sp. (strain OCh 114)).